The sequence spans 359 residues: Zinc finger CCCH domain-containing protein 20 (359 aa).

C3H1-type zinc fingers lie at residues 75–107 (TCDH…HPGE), 119–145 (YSGT…HGVF), and 153–177 (RYRT…HSPD). 2 disordered regions span residues 207–226 (SISP…SDSS) and 334–359 (MGRI…DLVM).

This is Zinc finger CCCH domain-containing protein 20 from Arabidopsis thaliana (Mouse-ear cress).